A 1578-amino-acid polypeptide reads, in one-letter code: Neurexin-3 (1578 aa).

Positions 1-27 (MSFTLHSVFFTLKVSSFLGSLVGLCLG) are cleaved as a signal peptide. The Laminin G-like 1 domain maps to 28 to 202 (LEFMGLPNQW…SVQLEAEGPC (175 aa)). The Extracellular segment spans residues 28–1503 (LEFMGLPNQW…EVIRESNSTT (1476 aa)). Residues Asn-58 and Asn-105 are each glycosylated (N-linked (GlcNAc...) asparagine). Positions 198 to 235 (AEGPCGERPCENGGICFLLDGHPTCDCSTTGYGGTLCS) constitute an EGF-like 1 domain. 3 cysteine pairs are disulfide-bonded: Cys-202-Cys-213, Cys-207-Cys-222, and Cys-224-Cys-234. 2 Laminin G-like domains span residues 260–444 (ENVA…VFKC) and 451–643 (DPIN…KSSC). Residues Asp-308, Leu-325, and Met-378 each contribute to the Ca(2+) site. 5 cysteine pairs are disulfide-bonded: Cys-408-Cys-444, Cys-614-Cys-643, Cys-651-Cys-662, Cys-656-Cys-671, and Cys-673-Cys-683. One can recognise an EGF-like 2 domain in the interval 647–684 (SAKQCDSYPCKNNAVCKDGWNRFICDCTGTGYWGRTCE). 2 consecutive Laminin G-like domains span residues 689 to 861 (ILSY…IDYC) and 875 to 1050 (DPVT…DRGC). Residues Asp-736 and Leu-753 each contribute to the Ca(2+) site. A glycan (N-linked (GlcNAc...) asparagine) is linked at Asn-761. Residue Arg-811 participates in Ca(2+) binding. Cystine bridges form between Cys-1022/Cys-1050, Cys-1057/Cys-1068, Cys-1062/Cys-1077, and Cys-1079/Cys-1089. The EGF-like 3 domain maps to 1053-1090 (PSTTCQEDSCANQGVCMQQWEGFTCDCSMTSYSGNQCN). Positions 1094–1294 (ATYIFGKSGG…NPNIKINGSV (201 aa)) constitute a Laminin G-like 6 domain. Ca(2+) contacts are provided by Asp-1146 and Ile-1163. A glycan (N-linked (GlcNAc...) asparagine) is linked at Asn-1193. 2 residues coordinate Ca(2+): Ile-1245 and Asn-1247. Asn-1291 and Asn-1335 each carry an N-linked (GlcNAc...) asparagine glycan. The segment at 1328 to 1352 (ATTTTRKNRSTASIQPTSDDLVSSA) is disordered. A compositionally biased stretch (polar residues) spans 1337–1352 (STASIQPTSDDLVSSA). A glycan (O-linked (Xyl...) (heparan sulfate) serine) is linked at Ser-1351. An N-linked (GlcNAc...) asparagine glycan is attached at Asn-1500. The chain crosses the membrane as a helical span at residues 1504–1524 (GMVVGIVAAAALCILILLYAM). Residues 1525-1578 (YKYRNRDEGSYQVDETRNYISNSAQSNGTLMKEKQASSKSGHKKQKNKDKEYYV) are Cytoplasmic-facing. Positions 1546-1578 (NSAQSNGTLMKEKQASSKSGHKKQKNKDKEYYV) are disordered.

Belongs to the neurexin family. In terms of assembly, the laminin G-like domain 2 binds to NXPH1. Isoform 8/alpha-4B binds to alpha-dystroglycan. The cytoplasmic C-terminal region binds to CASK. Specific isoforms bind neuroligins NLGN1, NLGN2 and NLGN3. Interacts with CLSTN3. Post-translationally, O-glycosylated; contains heparan sulfate. Heparan sulfate attachment is required for synapse development by mediating interactions with neuroligins. In terms of tissue distribution, brain.

Its subcellular location is the presynaptic cell membrane. Neuronal cell surface protein that may be involved in cell recognition and cell adhesion. May mediate intracellular signaling. In Rattus norvegicus (Rat), this protein is Neurexin-3 (Nrxn3).